The sequence spans 437 residues: 5-hydroxytryptamine receptor 3B (437 aa).

An N-terminal signal peptide occupies residues 1-21; that stretch reads MILLWSCLLVAVVGILGTATP. The Extracellular portion of the chain corresponds to 22 to 238; that stretch reads QPGNSSLHRL…VVIRRCPLAY (217 aa). N-linked (GlcNAc...) asparagine glycosylation is found at Asn25, Asn92, and Asn134. Residues Cys151 and Cys165 are joined by a disulfide bond. A helical transmembrane segment spans residues 239–259; the sequence is VVSLLIPSIFLMLVDLGSFYL. Residues 260 to 264 are Cytoplasmic-facing; sequence PPNCR. Residues 265–282 traverse the membrane as a helical segment; sequence ARIVFKTNVLVGYTVFRV. Asn283 carries N-linked (GlcNAc...) asparagine glycosylation. The Extracellular segment spans residues 283-292; sequence NMSDEVPRSA. Residues 293-313 traverse the membrane as a helical segment; that stretch reads GCTPLIGVFFTVCMALLVLSL. The Cytoplasmic segment spans residues 314–410; it reads SKSILLIKFL…WLAILYRFDQ (97 aa). The tract at residues 377-409 is HA-stretch; determines single-channel conductance in 5-HT3 receptors; it reads FWFQFRSINNSLRTRDQIHQKEVEWLAILYRFD. Residues 411-431 traverse the membrane as a helical segment; it reads LLFRIYLAVLGLYTVTLCSLW. The Extracellular segment spans residues 432 to 437; it reads ALWSRM.

This sequence belongs to the ligand-gated ion channel (TC 1.A.9) family. 5-hydroxytryptamine receptor (TC 1.A.9.2) subfamily. HTR3B sub-subfamily. As to quaternary structure, forms homopentameric as well as heteropentameric serotonin-activated cation-selective channel complexes with HTR3A. The homomeric complex is not functional. Heteropentameric complexes display properties which resemble that of neuronal serotonin-activated channels in vivo. N-glycosylation is required for membrane localization.

The protein resides in the postsynaptic cell membrane. The protein localises to the cell membrane. It carries out the reaction Na(+)(in) = Na(+)(out). The enzyme catalyses K(+)(in) = K(+)(out). It catalyses the reaction Ca(2+)(in) = Ca(2+)(out). Its function is as follows. Forms serotonin (5-hydroxytryptamine/5-HT3)-activated cation-selective channel complexes, which when activated cause fast, depolarizing responses in neurons. In Mus musculus (Mouse), this protein is 5-hydroxytryptamine receptor 3B.